The following is a 177-amino-acid chain: Crossover junction endodeoxyribonuclease RuvC (177 aa).

Active-site residues include aspartate 7, glutamate 68, and aspartate 141. Residues aspartate 7, glutamate 68, and aspartate 141 each contribute to the Mg(2+) site.

This sequence belongs to the RuvC family. As to quaternary structure, homodimer which binds Holliday junction (HJ) DNA. The HJ becomes 2-fold symmetrical on binding to RuvC with unstacked arms; it has a different conformation from HJ DNA in complex with RuvA. In the full resolvosome a probable DNA-RuvA(4)-RuvB(12)-RuvC(2) complex forms which resolves the HJ. It depends on Mg(2+) as a cofactor.

The protein resides in the cytoplasm. The catalysed reaction is Endonucleolytic cleavage at a junction such as a reciprocal single-stranded crossover between two homologous DNA duplexes (Holliday junction).. Its function is as follows. The RuvA-RuvB-RuvC complex processes Holliday junction (HJ) DNA during genetic recombination and DNA repair. Endonuclease that resolves HJ intermediates. Cleaves cruciform DNA by making single-stranded nicks across the HJ at symmetrical positions within the homologous arms, yielding a 5'-phosphate and a 3'-hydroxyl group; requires a central core of homology in the junction. The consensus cleavage sequence is 5'-(A/T)TT(C/G)-3'. Cleavage occurs on the 3'-side of the TT dinucleotide at the point of strand exchange. HJ branch migration catalyzed by RuvA-RuvB allows RuvC to scan DNA until it finds its consensus sequence, where it cleaves and resolves the cruciform DNA. In Nocardioides sp. (strain ATCC BAA-499 / JS614), this protein is Crossover junction endodeoxyribonuclease RuvC.